A 226-amino-acid chain; its full sequence is Tyramine N-feruloyltransferase 10/30 (226 aa).

The tract at residues 29-45 (HIYKLFYQIHEYHNYTH) is important in binding site and for catalytic activity. One can recognise an N-acetyltransferase domain in the interval 72–222 (VLLLEVSPTP…VGDALQKYAD (151 aa)).

It belongs to the acetyltransferase family. As to quaternary structure, homodimer.

Its subcellular location is the cytoplasm. It catalyses the reaction tyramine + (E)-feruloyl-CoA = N-[(E)-feruloyl]tyramine + CoA + H(+). Inhibited by (2-hydroxyphenyl)amino sulfinyl acetic acid 1,1-dimethylethyl ester, by DEPC and by N-ethylmaleimide. Its function is as follows. Synthesizes amides which are involved in stress response in the cell wall. Catalyzes the synthesis of hydroxycinnamic acid amides from hydroxycinnamoyl-CoA thioesters and various hydroxyphenylethylamines such as 4-coumaroyl-CoA and sinapoyl-CoA. The protein is Tyramine N-feruloyltransferase 10/30 (THT10) of Nicotiana tabacum (Common tobacco).